Consider the following 331-residue polypeptide: Protein Brevis radix-like 1 (331 aa).

The segment at 1-111 (MFTCINCTKM…HQSGRPDSRF (111 aa)) is disordered. Composition is skewed to polar residues over residues 25-41 (STTPNTKEAVKSLTTQI) and 48-66 (FSGSHKQSKPTPGSSSSNL). One can recognise a BRX 1 domain in the interval 137–192 (KEWMAQVEPGVHITFVSLPSGGNDLKRIRFSREVFDKWQAQRWWGENYDRIVELYN). Disordered stretches follow at residues 201–246 (LQTP…VPHH) and 258–279 (TTSSRDEPPSMSNASEMQGEWV). Residues 221–235 (DSARESRDWTQRDNN) show a composition bias toward basic and acidic residues. A BRX 2 domain is found at 276–331 (GEWVEEDEPGVYITIRQLPDGTRELRRVRFSRERFGEVHAKTWWEQNRDRIQTQYL).

Belongs to the BRX family. As to quaternary structure, heterodimer with BRXL1. In terms of tissue distribution, expressed in roots.

It localises to the nucleus. Its function is as follows. May act as a regulator of cell proliferation and elongation in the root. The protein is Protein Brevis radix-like 1 (BRXL1) of Arabidopsis thaliana (Mouse-ear cress).